We begin with the raw amino-acid sequence, 424 residues long: CinA-like protein (424 aa).

It belongs to the CinA family.

This chain is CinA-like protein, found in Prochlorococcus marinus (strain MIT 9215).